We begin with the raw amino-acid sequence, 196 residues long: ATP-dependent Clp protease proteolytic subunit 1 (196 aa).

Ser-96 functions as the Nucleophile in the catalytic mechanism. His-121 is a catalytic residue.

Belongs to the peptidase S14 family. In terms of assembly, fourteen ClpP subunits assemble into 2 heptameric rings which stack back to back to give a disk-like structure with a central cavity, resembling the structure of eukaryotic proteasomes.

The protein resides in the cytoplasm. The enzyme catalyses Hydrolysis of proteins to small peptides in the presence of ATP and magnesium. alpha-casein is the usual test substrate. In the absence of ATP, only oligopeptides shorter than five residues are hydrolyzed (such as succinyl-Leu-Tyr-|-NHMec, and Leu-Tyr-Leu-|-Tyr-Trp, in which cleavage of the -Tyr-|-Leu- and -Tyr-|-Trp bonds also occurs).. In terms of biological role, cleaves peptides in various proteins in a process that requires ATP hydrolysis. Has a chymotrypsin-like activity. Plays a major role in the degradation of misfolded proteins. This is ATP-dependent Clp protease proteolytic subunit 1 from Prochlorococcus marinus subsp. pastoris (strain CCMP1986 / NIES-2087 / MED4).